A 686-amino-acid chain; its full sequence is Glycogenin (686 aa).

Residues Leu-13, Asn-16, Tyr-19, and Arg-82 each coordinate UDP. UDP-alpha-D-glucose is bound by residues Leu-13, Asn-16, Tyr-19, Arg-82, Lys-91, Asp-107, Ala-108, Asp-109, Asn-139, Thr-140, Asp-166, Asp-169, and Gln-170. Residues Asp-107, Ala-108, and Asp-109 each coordinate UDP. Residue Asp-107 participates in Mn(2+) binding. A Mn(2+)-binding site is contributed by Asp-109. O-linked (Glc...) tyrosine glycosylation is found at Tyr-196 and Tyr-198. UDP-binding residues include His-213, Gly-216, and Lys-219. His-213 lines the Mn(2+) pocket. Gly-216 and Lys-219 together coordinate UDP-alpha-D-glucose. Disordered stretches follow at residues 264–331, 381–444, 460–533, and 603–686; these read VKGE…ANFP, PEPT…RGNA, KHRR…GVPA, and KPLR…VLET. 2 stretches are compositionally biased toward low complexity: residues 285–308 and 398–416; these read SSQS…YTSH and SAAS…ASPT. Residues 307 to 686 form a not required for catalytic activity region; that stretch reads SHGASWDASR…TEEERDVLET (380 aa). 2 stretches are compositionally biased toward polar residues: residues 424–442 and 471–483; these read VTPT…TTRG and AATS…GRAQ. The segment covering 677-686 has biased composition (acidic residues); that stretch reads TEEERDVLET.

Belongs to the glycosyltransferase 8 family. Glycogenin subfamily. In terms of assembly, interacts with glycogen synthase gsy-1; the interaction is direct. Requires Mn(2+) as cofactor.

The protein localises to the cytoplasm. It is found in the vacuole. The catalysed reaction is L-tyrosyl-[glycogenin] + UDP-alpha-D-glucose = alpha-D-glucosyl-L-tyrosyl-[glycogenin] + UDP + H(+). The enzyme catalyses [1,4-alpha-D-glucosyl](n)-L-tyrosyl-[glycogenin] + UDP-alpha-D-glucose = [1,4-alpha-D-glucosyl](n+1)-L-tyrosyl-[glycogenin] + UDP + H(+). In terms of biological role, self-glucosylating initiator of glycogen synthesis. It catalyzes the formation of a short alpha (1,4)-glucosyl chain covalently attached via a glucose 1-O-tyrosyl linkage to internal tyrosine residues and these chains act as primers for the elongation reaction catalyzed by glycogen synthase. The sequence is that of Glycogenin from Neurospora crassa (strain ATCC 24698 / 74-OR23-1A / CBS 708.71 / DSM 1257 / FGSC 987).